Reading from the N-terminus, the 38-residue chain is Potassium channel toxin alpha-KTx 2.3 (38 aa).

3 disulfides stabilise this stretch: Cys7/Cys29, Cys13/Cys34, and Cys17/Cys36.

The protein belongs to the short scorpion toxin superfamily. Potassium channel inhibitor family. Alpha-KTx 02 subfamily. Expressed by the venom gland.

Its subcellular location is the secreted. Its function is as follows. Inhibitor of voltage-gated potassium channels (Kv). It is capable of displacing the binding of radio-labeled noxiustoxin (AC P08815) to rat brain synaptosomes with high affinity (about 100 pM). It is also capable of inhibiting transient potassium-currents (resembling I(A)-type currents), in cultured rat cerebellar granule cells. About 50% of the peak currents are reduced by application of a 1.5 uM solution of this toxin. The sequence is that of Potassium channel toxin alpha-KTx 2.3 from Centruroides limpidus (Mexican scorpion).